Reading from the N-terminus, the 217-residue chain is tRNA (guanine-N(7)-)-methyltransferase (217 aa).

Residues E44, E69, D96, and D118 each coordinate S-adenosyl-L-methionine. D118 is an active-site residue. K122 contacts substrate. The tract at residues R124–R129 is interaction with RNA. Substrate contacts are provided by residues D154 and T191–E194.

The protein belongs to the class I-like SAM-binding methyltransferase superfamily. TrmB family.

The enzyme catalyses guanosine(46) in tRNA + S-adenosyl-L-methionine = N(7)-methylguanosine(46) in tRNA + S-adenosyl-L-homocysteine. The protein operates within tRNA modification; N(7)-methylguanine-tRNA biosynthesis. Its function is as follows. Catalyzes the formation of N(7)-methylguanine at position 46 (m7G46) in tRNA. The sequence is that of tRNA (guanine-N(7)-)-methyltransferase from Bacillus velezensis (strain DSM 23117 / BGSC 10A6 / LMG 26770 / FZB42) (Bacillus amyloliquefaciens subsp. plantarum).